Reading from the N-terminus, the 156-residue chain is Deoxyuridine 5'-triphosphate nucleotidohydrolase (156 aa).

Substrate is bound by residues 74 to 76 (RSG), asparagine 87, 91 to 93 (TID), and lysine 101.

Belongs to the dUTPase family. Mg(2+) is required as a cofactor.

The catalysed reaction is dUTP + H2O = dUMP + diphosphate + H(+). It participates in pyrimidine metabolism; dUMP biosynthesis; dUMP from dCTP (dUTP route): step 2/2. This enzyme is involved in nucleotide metabolism: it produces dUMP, the immediate precursor of thymidine nucleotides and it decreases the intracellular concentration of dUTP so that uracil cannot be incorporated into DNA. The chain is Deoxyuridine 5'-triphosphate nucleotidohydrolase from Wolbachia sp. subsp. Brugia malayi (strain TRS).